Reading from the N-terminus, the 112-residue chain is MQQLVEQLNAQIPLEGYLTVAAIMFAIGAWGALIRRNAVVVFMCVELMINAVNLTLVAFADFLPGAGGAGAGYTVLIIAIAAAEVAVGLAIVLAIFRTRRTVNIDEVDSLRG.

The next 3 membrane-spanning stretches (helical) occupy residues 14-34 (LEGY…GALI), 39-59 (VVVF…LVAF), and 76-96 (LIIA…LAIF).

It belongs to the complex I subunit 4L family. As to quaternary structure, NDH-1 is composed of 14 different subunits. Subunits NuoA, H, J, K, L, M, N constitute the membrane sector of the complex.

Its subcellular location is the cell membrane. It catalyses the reaction a quinone + NADH + 5 H(+)(in) = a quinol + NAD(+) + 4 H(+)(out). Functionally, NDH-1 shuttles electrons from NADH, via FMN and iron-sulfur (Fe-S) centers, to quinones in the respiratory chain. The immediate electron acceptor for the enzyme in this species is believed to be a menaquinone. Couples the redox reaction to proton translocation (for every two electrons transferred, four hydrogen ions are translocated across the cytoplasmic membrane), and thus conserves the redox energy in a proton gradient. The polypeptide is NADH-quinone oxidoreductase subunit K (Rubrobacter xylanophilus (strain DSM 9941 / JCM 11954 / NBRC 16129 / PRD-1)).